A 527-amino-acid chain; its full sequence is MDLHRAPWKSSAAAAVLLLALFSGAAASSVEKNLAACLRDNDYDQLLQTVQDGLPHINTSNHVVIVGAGVAGLTAAKLLQDAGHRVTIVEANSRIGGRVETYRNKEEGWYADLGAMRIPSDHSIFRWFAKTLGVKLNPFIMDDHNTFYFVNGLLKRTYTVEANPDILNYKVRSSEKGKSANTLFQDALQKVKDEVEAHGCRAALMKYDKYSAKEYLKEVAGLSSEALRMIGDLLNEQSLMYTALSEMIYDQADVNDNVQYDEVTGGTDLFPRAFLSVLDVPILLNSKVQRIRRSRDGVTVSFKESQRSSLTDLHADMVLVTTTAKAALYMDFEPSLSIRKMEALRAVHYDSSTKIILTFSSRFWEEDGIRGGKSITDRPSRYIYYPSHTFPANSSVGVLLASYTWSDDSLLLQAASDEELKEMALRDLVKIHGERVRALCTGVVVKKWSLDPYSFGAFALFTPYQHLEYAKELFRSEGRVHFAGEHTAFPHAWMESAMKSAIRAATNINKQTLLNEGMNECPAPDEL.

A signal peptide spans 1–27 (MDLHRAPWKSSAAAAVLLLALFSGAAA). Cysteines 37 and 200 form a disulfide. N-linked (GlcNAc...) asparagine glycosylation occurs at asparagine 58. FAD contacts are provided by residues 70 to 71 (VA), 90 to 91 (EA), arginine 98, 114 to 117 (GAMR), and valine 288. Arginine 117 lines the substrate pocket. Asparagine 393 carries N-linked (GlcNAc...) asparagine glycosylation. Tyrosine 403 is a binding site for substrate. Residues glutamate 485 and 492–497 (AWMESA) each bind FAD. 492-493 (AW) contacts substrate.

As to quaternary structure, homodimer. FAD is required as a cofactor. In terms of tissue distribution, expression mainly observed in plasma, spleen, kidney and gills with low levels detected in blood and no expression detected in brain, liver, heart, muscle or intestine (at protein level).

It localises to the secreted. The enzyme catalyses an L-alpha-amino acid + O2 + H2O = a 2-oxocarboxylate + H2O2 + NH4(+). Functionally, inhibits the growth of both Gram-negative and Gram-positive bacteria. Displays strong antibacterial activity towards V.cholerae and E.tarda. Causes deformation of the surface of S.aureus and the formation of pores on the surface of E.coli. Strong antiparasitic activity is seen towards C.irritans, T.brucei and I.multifiliis. Cilia of treated theronts are lost and the macronucleus swells, inducing cell membrane rupture and efflux of the cytoplasm. This Siganus canaliculatus (White-spotted spinefoot) protein is L-amino-acid oxidase.